The sequence spans 433 residues: Protein RETICULATA-RELATED 1, chloroplastic (433 aa).

The transit peptide at 1-63 (MSISLKISHI…LSSRNLRNRC (63 aa)) directs the protein to the chloroplast. N-acetylvaline is present on V64. A compositionally biased stretch (acidic residues) spans 93 to 105 (DLEPELDDGDGGD). The disordered stretch occupies residues 93 to 143 (DLEPELDDGDGGDENGNNDGGGNGGNGDGGGGGGDGEGDDGEDEADKAEEK). Residues 110–127 (NDGGGNGGNGDGGGGGGD) are compositionally biased toward gly residues. Residues 128-139 (GEGDDGEDEADK) show a composition bias toward acidic residues. Transmembrane regions (helical) follow at residues 249 to 269 (LYAA…GLLA) and 323 to 343 (LLYG…ANLI).

Belongs to the RETICULATA family. As to expression, expressed in root vasculature, distal region of young leaf primordia, leaf bundle sheath cells, hydathodes and pollen grains.

Its subcellular location is the plastid. The protein resides in the chloroplast membrane. In terms of biological role, may play a role in leaf development. The chain is Protein RETICULATA-RELATED 1, chloroplastic from Arabidopsis thaliana (Mouse-ear cress).